Here is a 186-residue protein sequence, read N- to C-terminus: Pyridoxal 5'-phosphate synthase subunit PdxT (186 aa).

Position 47–49 (47–49 (GES)) interacts with L-glutamine. C79 serves as the catalytic Nucleophile. L-glutamine contacts are provided by residues R106 and 134–135 (IR). Catalysis depends on charge relay system residues H170 and E172.

The protein belongs to the glutaminase PdxT/SNO family. In terms of assembly, in the presence of PdxS, forms a dodecamer of heterodimers. Only shows activity in the heterodimer.

The enzyme catalyses aldehydo-D-ribose 5-phosphate + D-glyceraldehyde 3-phosphate + L-glutamine = pyridoxal 5'-phosphate + L-glutamate + phosphate + 3 H2O + H(+). It catalyses the reaction L-glutamine + H2O = L-glutamate + NH4(+). The protein operates within cofactor biosynthesis; pyridoxal 5'-phosphate biosynthesis. Catalyzes the hydrolysis of glutamine to glutamate and ammonia as part of the biosynthesis of pyridoxal 5'-phosphate. The resulting ammonia molecule is channeled to the active site of PdxS. This is Pyridoxal 5'-phosphate synthase subunit PdxT from Methanothrix thermoacetophila (strain DSM 6194 / JCM 14653 / NBRC 101360 / PT) (Methanosaeta thermophila).